The primary structure comprises 601 residues: Casbene synthase, chloroplastic (601 aa).

A chloroplast-targeting transit peptide spans 1 to 56; the sequence is MALPSAAMQSNPEKLNLFHRLSSLPTTSLEYGNNRFPFFSSSAKSHFKKPTQACLS. Positions 355, 359, 499, 503, and 507 each coordinate Mg(2+). Positions 355-359 match the DDXXD motif motif; that stretch reads DDTID.

The protein belongs to the terpene synthase family. The cofactor is Mg(2+).

The protein resides in the plastid. It is found in the chloroplast. The catalysed reaction is (2E,6E,10E)-geranylgeranyl diphosphate = casbene + diphosphate. Catalyzes the cyclization of geranylgeranyl diphosphate to casbene, a diterpene phytoalexin with antibacterial and antifungal activity. The sequence is that of Casbene synthase, chloroplastic from Ricinus communis (Castor bean).